Here is a 107-residue protein sequence, read N- to C-terminus: Heme-degrading monooxygenase (107 aa).

The ABM domain occupies 2-94 (IIVTNTAKIT…YILDNKIAYY (93 aa)). Fe cation is bound at residue Asn6. Residue His76 coordinates heme.

The protein belongs to the antibiotic biosynthesis monooxygenase family. Heme-degrading monooxygenase IsdG subfamily. Homodimer.

It localises to the cytoplasm. It carries out the reaction heme b + 3 reduced [NADPH--hemoprotein reductase] + 3 O2 = biliverdin IXalpha + CO + Fe(2+) + 3 oxidized [NADPH--hemoprotein reductase] + 3 H2O + H(+). Functionally, allows bacterial pathogens to use the host heme as an iron source. Catalyzes the oxidative degradation of the heme macrocyclic porphyrin ring to the biliverdin in the presence of a suitable electron donor such as ascorbate or NADPH--cytochrome P450 reductase, with subsequent release of free iron. The chain is Heme-degrading monooxygenase from Bacillus cereus (strain ATCC 14579 / DSM 31 / CCUG 7414 / JCM 2152 / NBRC 15305 / NCIMB 9373 / NCTC 2599 / NRRL B-3711).